A 181-amino-acid polypeptide reads, in one-letter code: ATP synthase subunit delta (181 aa).

Belongs to the ATPase delta chain family. As to quaternary structure, F-type ATPases have 2 components, F(1) - the catalytic core - and F(0) - the membrane proton channel. F(1) has five subunits: alpha(3), beta(3), gamma(1), delta(1), epsilon(1). F(0) has three main subunits: a(1), b(2) and c(10-14). The alpha and beta chains form an alternating ring which encloses part of the gamma chain. F(1) is attached to F(0) by a central stalk formed by the gamma and epsilon chains, while a peripheral stalk is formed by the delta and b chains.

It localises to the cell inner membrane. Functionally, f(1)F(0) ATP synthase produces ATP from ADP in the presence of a proton or sodium gradient. F-type ATPases consist of two structural domains, F(1) containing the extramembraneous catalytic core and F(0) containing the membrane proton channel, linked together by a central stalk and a peripheral stalk. During catalysis, ATP synthesis in the catalytic domain of F(1) is coupled via a rotary mechanism of the central stalk subunits to proton translocation. This protein is part of the stalk that links CF(0) to CF(1). It either transmits conformational changes from CF(0) to CF(1) or is implicated in proton conduction. This Aquifex aeolicus (strain VF5) protein is ATP synthase subunit delta.